A 238-amino-acid polypeptide reads, in one-letter code: uncharacterized protein (238 aa).

Helical transmembrane passes span 22 to 42 (VYGW…GLYA), 49 to 69 (LFSL…YIQA), 78 to 98 (AVMG…GTMV), 105 to 125 (FGGG…GLSA), 141 to 161 (ILML…VVSL), 166 to 186 (PLMY…LTVV), and 208 to 228 (LSLI…WYLL).

It belongs to the BI1 family.

The protein resides in the cell membrane. This is an uncharacterized protein from Chlamydia muridarum (strain MoPn / Nigg).